A 303-amino-acid polypeptide reads, in one-letter code: Bifunctional protein FolD 2 (303 aa).

NADP(+) is bound by residues 169 to 171 (GRS), serine 194, and isoleucine 235.

It belongs to the tetrahydrofolate dehydrogenase/cyclohydrolase family. In terms of assembly, homodimer.

The catalysed reaction is (6R)-5,10-methylene-5,6,7,8-tetrahydrofolate + NADP(+) = (6R)-5,10-methenyltetrahydrofolate + NADPH. The enzyme catalyses (6R)-5,10-methenyltetrahydrofolate + H2O = (6R)-10-formyltetrahydrofolate + H(+). Its pathway is one-carbon metabolism; tetrahydrofolate interconversion. Functionally, catalyzes the oxidation of 5,10-methylenetetrahydrofolate to 5,10-methenyltetrahydrofolate and then the hydrolysis of 5,10-methenyltetrahydrofolate to 10-formyltetrahydrofolate. This Ectopseudomonas mendocina (strain ymp) (Pseudomonas mendocina) protein is Bifunctional protein FolD 2.